Reading from the N-terminus, the 204-residue chain is Tetraspanin-13 (204 aa).

At 1–19 (MVCGGFACSKNCLCALNLL) the chain is on the cytoplasmic side. The chain crosses the membrane as a helical span at residues 20–40 (YTLVSLLLIGIAAWGIGFGLI). Topologically, residues 41–44 (SSLR) are extracellular. Residues 45 to 65 (VVGVVIAVGIFLFLIALVGLI) traverse the membrane as a helical segment. Over 66-72 (GAVKHHQ) the chain is Cytoplasmic. The chain crosses the membrane as a helical span at residues 73–93 (VLLFFYMIILLLVFIVQFSVS). At 94 to 167 (CACLALNQEQ…IGRYAGEVLR (74 aa)) the chain is on the extracellular side. Residues N113 and N137 are each glycosylated (N-linked (GlcNAc...) asparagine). S143 is subject to Phosphoserine. A helical transmembrane segment spans residues 168–188 (FVGGIGLFFSFTEILGVWLTY). The Cytoplasmic segment spans residues 189–204 (RYRNQKDPRANPSAFL).

Belongs to the tetraspanin (TM4SF) family.

Its subcellular location is the membrane. This Bos taurus (Bovine) protein is Tetraspanin-13 (TSPAN13).